We begin with the raw amino-acid sequence, 300 residues long: 4-hydroxy-tetrahydrodipicolinate synthase (300 aa).

Threonine 45 contacts pyruvate. Tyrosine 140 functions as the Proton donor/acceptor in the catalytic mechanism. Lysine 169 functions as the Schiff-base intermediate with substrate in the catalytic mechanism. Valine 210 provides a ligand contact to pyruvate.

This sequence belongs to the DapA family. Homotetramer; dimer of dimers.

The protein resides in the cytoplasm. The enzyme catalyses L-aspartate 4-semialdehyde + pyruvate = (2S,4S)-4-hydroxy-2,3,4,5-tetrahydrodipicolinate + H2O + H(+). It functions in the pathway amino-acid biosynthesis; L-lysine biosynthesis via DAP pathway; (S)-tetrahydrodipicolinate from L-aspartate: step 3/4. Catalyzes the condensation of (S)-aspartate-beta-semialdehyde [(S)-ASA] and pyruvate to 4-hydroxy-tetrahydrodipicolinate (HTPA). The protein is 4-hydroxy-tetrahydrodipicolinate synthase of Helicobacter acinonychis (strain Sheeba).